The following is a 298-amino-acid chain: Phosphatidylglycerol--prolipoprotein diacylglyceryl transferase (298 aa).

The next 7 membrane-spanning stretches (helical) occupy residues 17–37 (LAVR…IVVG), 59–79 (MMFY…VLFY), 97–117 (GGMS…LFAW), 129–149 (FVAP…FING), 204–224 (SQLY…FLFA), 230–250 (MGAI…TVEF), and 257–277 (FLGL…PMIL). Arginine 142 provides a ligand contact to a 1,2-diacyl-sn-glycero-3-phospho-(1'-sn-glycerol).

It belongs to the Lgt family.

The protein localises to the cell inner membrane. The catalysed reaction is L-cysteinyl-[prolipoprotein] + a 1,2-diacyl-sn-glycero-3-phospho-(1'-sn-glycerol) = an S-1,2-diacyl-sn-glyceryl-L-cysteinyl-[prolipoprotein] + sn-glycerol 1-phosphate + H(+). It functions in the pathway protein modification; lipoprotein biosynthesis (diacylglyceryl transfer). In terms of biological role, catalyzes the transfer of the diacylglyceryl group from phosphatidylglycerol to the sulfhydryl group of the N-terminal cysteine of a prolipoprotein, the first step in the formation of mature lipoproteins. This is Phosphatidylglycerol--prolipoprotein diacylglyceryl transferase from Burkholderia orbicola (strain MC0-3).